We begin with the raw amino-acid sequence, 342 residues long: Heat-inducible transcription repressor HrcA (342 aa).

This sequence belongs to the HrcA family.

In terms of biological role, negative regulator of class I heat shock genes (grpE-dnaK-dnaJ and groELS operons). Prevents heat-shock induction of these operons. In Mesoplasma florum (strain ATCC 33453 / NBRC 100688 / NCTC 11704 / L1) (Acholeplasma florum), this protein is Heat-inducible transcription repressor HrcA.